Here is a 780-residue protein sequence, read N- to C-terminus: Cation channel sperm-associated protein 1 (780 aa).

Disordered stretches follow at residues Met-1–Ser-37, Leu-71–His-306, and Gln-376–Thr-412. At Met-1–Leu-447 the chain is on the cytoplasmic side. The segment covering Ser-110 to Asp-122 has biased composition (basic and acidic residues). The span at Gln-211 to Pro-241 shows a compositional bias: basic residues. A compositionally biased stretch (basic and acidic residues) spans Ser-261–His-284. Over residues His-285–Tyr-299 the composition is skewed to basic residues. The span at Ser-387–Phe-401 shows a compositional bias: basic and acidic residues. A compositionally biased stretch (basic residues) spans Gln-402 to Thr-412. The chain crosses the membrane as a helical span at residues Ala-448–Phe-469. Residues Ala-470–Trp-478 are Extracellular-facing. A helical transmembrane segment spans residues Tyr-479–Ile-500. Residues Ala-501–Phe-508 are Cytoplasmic-facing. The chain crosses the membrane as a helical span at residues Asp-509 to Thr-531. At His-532–Ser-540 the chain is on the extracellular side. The chain crosses the membrane as a helical span at residues Leu-541–Leu-563. Residues Ser-564–Pro-581 are Cytoplasmic-facing. Residues Ser-582–Leu-604 traverse the membrane as a helical segment. Residues Phe-605 to Asn-615 are Extracellular-facing. The segment at residues Ile-616–Thr-628 is an intramembrane region (helical; Pore-forming). Residues Leu-629 to Trp-645 lie on the Extracellular side of the membrane. The chain crosses the membrane as a helical span at residues Tyr-646–Val-671. At Asp-672–Asn-780 the chain is on the cytoplasmic side.

The protein belongs to the cation channel sperm-associated (TC 1.A.1.19) family. As to quaternary structure, component of the CatSper complex or CatSpermasome composed of the core pore-forming members CATSPER1, CATSPER2, CATSPER3 and CATSPER4 as well as auxiliary members CATSPERB, CATSPERG, CATSPERD, CATSPERE, CATSPERZ, C2CD6/CATSPERT, TMEM249, TMEM262 and EFCAB9. HSPA1 may be an additional auxiliary complex member. The core complex members CATSPER1, CATSPER2, CATSPER3 and CATSPER4 form a heterotetrameric channel. The auxiliary CATSPERB, CATSPERG, CATSPERD and CATSPERE subunits form a pavilion-like structure over the pore which stabilizes the complex through interactions with CATSPER4, CATSPER3, CATSPER1 and CATSPER2 respectively. TMEM262/CATSPERH interacts with CATSPERB, further stabilizing the complex. C2CD6/CATSPERT interacts at least with CATSPERD and is required for targeting the CatSper complex in the flagellar membrane. Interacts with Ca(v)3.3/CACNA1I, leading to suppression of T-type calcium channel activity. Testis-specific.

Its subcellular location is the cell projection. The protein localises to the cilium. It is found in the flagellum membrane. The catalysed reaction is Ca(2+)(in) = Ca(2+)(out). With respect to regulation, the CatSper calcium channel is indirectly activated by extracellular progesterone and prostaglandins following the sequence: progesterone &gt; PGF1-alpha = PGE1 &gt; PGA1 &gt; PGE2 &gt;&gt; PGD2. The CatSper calcium channel is directly inhibited by endocannabinoid 2-arachidonoylglycerol (2AG). Indirect activation by progesterone takes place via the following mechanism: progesterone binds and activates the acylglycerol lipase ABHD2, which in turn mediates hydrolysis of 2AG inhibitor, relieving inhibition of the CatSper channel. The primary effect of progesterone activation is to shift voltage dependence towards more physiological, negative membrane potentials; it is not mediated by metabotropic receptors and second messengers. Sperm capacitation enhances the effect of progesterone by providing additional negative shift. Also activated by the elevation of intracellular pH. Pore-forming subunit of the CatSper complex, a sperm-specific voltage-gated calcium channel that plays a central role in calcium-dependent physiological responses essential for successful fertilization, such as sperm hyperactivation, acrosome reaction and chemotaxis towards the oocyte. This chain is Cation channel sperm-associated protein 1 (CATSPER1), found in Homo sapiens (Human).